The chain runs to 76 residues: Tautomerase PptA (76 aa).

The active-site Proton acceptor; via imino nitrogen is Pro2.

The protein belongs to the 4-oxalocrotonate tautomerase family. PptA subfamily. As to quaternary structure, homodimer.

The protein resides in the cytoplasm. This Enterobacter sp. (strain 638) protein is Tautomerase PptA.